Here is a 317-residue protein sequence, read N- to C-terminus: 4-hydroxy-3-methylbut-2-enyl diphosphate reductase (317 aa).

Residue Cys-12 coordinates [4Fe-4S] cluster. 2 residues coordinate (2E)-4-hydroxy-3-methylbut-2-enyl diphosphate: His-41 and His-74. His-41 and His-74 together coordinate dimethylallyl diphosphate. His-41 and His-74 together coordinate isopentenyl diphosphate. Cys-97 contacts [4Fe-4S] cluster. His-125 contacts (2E)-4-hydroxy-3-methylbut-2-enyl diphosphate. His-125 lines the dimethylallyl diphosphate pocket. His-125 is a binding site for isopentenyl diphosphate. Glu-127 functions as the Proton donor in the catalytic mechanism. Thr-168 is a (2E)-4-hydroxy-3-methylbut-2-enyl diphosphate binding site. [4Fe-4S] cluster is bound at residue Cys-198. Residues Ser-226, Ser-227, Asn-228, and Ser-270 each coordinate (2E)-4-hydroxy-3-methylbut-2-enyl diphosphate. Positions 226, 227, 228, and 270 each coordinate dimethylallyl diphosphate. Ser-226, Ser-227, Asn-228, and Ser-270 together coordinate isopentenyl diphosphate.

Belongs to the IspH family. As to quaternary structure, homodimer. It depends on [4Fe-4S] cluster as a cofactor.

The catalysed reaction is isopentenyl diphosphate + 2 oxidized [2Fe-2S]-[ferredoxin] + H2O = (2E)-4-hydroxy-3-methylbut-2-enyl diphosphate + 2 reduced [2Fe-2S]-[ferredoxin] + 2 H(+). It catalyses the reaction dimethylallyl diphosphate + 2 oxidized [2Fe-2S]-[ferredoxin] + H2O = (2E)-4-hydroxy-3-methylbut-2-enyl diphosphate + 2 reduced [2Fe-2S]-[ferredoxin] + 2 H(+). It functions in the pathway isoprenoid biosynthesis; dimethylallyl diphosphate biosynthesis; dimethylallyl diphosphate from (2E)-4-hydroxy-3-methylbutenyl diphosphate: step 1/1. Its pathway is isoprenoid biosynthesis; isopentenyl diphosphate biosynthesis via DXP pathway; isopentenyl diphosphate from 1-deoxy-D-xylulose 5-phosphate: step 6/6. Its function is as follows. Catalyzes the conversion of 1-hydroxy-2-methyl-2-(E)-butenyl 4-diphosphate (HMBPP) into a mixture of isopentenyl diphosphate (IPP) and dimethylallyl diphosphate (DMAPP). Acts in the terminal step of the DOXP/MEP pathway for isoprenoid precursor biosynthesis. The protein is 4-hydroxy-3-methylbut-2-enyl diphosphate reductase of Edwardsiella ictaluri (strain 93-146).